We begin with the raw amino-acid sequence, 322 residues long: uncharacterized protein (322 aa).

This sequence belongs to the glycosyltransferase 2 family.

This is an uncharacterized protein from Nostoc sp. (strain PCC 7120 / SAG 25.82 / UTEX 2576).